The sequence spans 274 residues: uncharacterized protein (274 aa).

An N-terminal signal peptide occupies residues 1 to 19 (MKRINKVLLSLLCLVIAYA).

This is an uncharacterized protein from Rickettsia prowazekii (strain Madrid E).